Here is a 135-residue protein sequence, read N- to C-terminus: Large ribosomal subunit protein uL16m (135 aa).

This sequence belongs to the universal ribosomal protein uL16 family.

The protein resides in the mitochondrion. This is Large ribosomal subunit protein uL16m (RPL16) from Marchantia polymorpha (Common liverwort).